The primary structure comprises 25 residues: Caerin-1.2 (25 aa).

Leu25 carries the leucine amide modification.

As to expression, expressed by the skin parotoid and/or rostral glands.

Its subcellular location is the secreted. Its function is as follows. Antibacterial peptide, that adopts an alpha helical conformation which can disrupt bacterial membranes. Each caerin displays a different antimicrobial specificity. The sequence is that of Caerin-1.2 from Ranoidea caerulea (Green tree frog).